The chain runs to 201 residues: Sterile alpha motif domain-containing protein 12 (201 aa).

Residues 77–143 (WTQQDVCKWL…LQQVLQLKVR (67 aa)) form the SAM domain.

This is Sterile alpha motif domain-containing protein 12 (SAMD12) from Pongo abelii (Sumatran orangutan).